Reading from the N-terminus, the 389-residue chain is S-adenosylmethionine synthase 2 (389 aa).

Residue His17 participates in ATP binding. Asp19 contacts Mg(2+). Glu45 contributes to the K(+) binding site. 2 residues coordinate L-methionine: Glu58 and Gln102. The tract at residues 102–112 (QSADIAVGVDA) is flexible loop. Residues 166–168 (DSK), 231–232 (RF), Asp240, 246–247 (RK), Ala263, and Lys267 contribute to the ATP site. Residue Asp240 coordinates L-methionine. Lys271 provides a ligand contact to L-methionine.

It belongs to the AdoMet synthase family. In terms of assembly, homotetramer; dimer of dimers. Mg(2+) serves as cofactor. The cofactor is K(+).

It localises to the cytoplasm. The enzyme catalyses L-methionine + ATP + H2O = S-adenosyl-L-methionine + phosphate + diphosphate. The protein operates within amino-acid biosynthesis; S-adenosyl-L-methionine biosynthesis; S-adenosyl-L-methionine from L-methionine: step 1/1. Its function is as follows. Catalyzes the formation of S-adenosylmethionine (AdoMet) from methionine and ATP. The overall synthetic reaction is composed of two sequential steps, AdoMet formation and the subsequent tripolyphosphate hydrolysis which occurs prior to release of AdoMet from the enzyme. The polypeptide is S-adenosylmethionine synthase 2 (Rhodospirillum rubrum (strain ATCC 11170 / ATH 1.1.1 / DSM 467 / LMG 4362 / NCIMB 8255 / S1)).